Here is an 848-residue protein sequence, read N- to C-terminus: DNA mismatch repair protein MutS (848 aa).

Position 605 to 612 (605 to 612) interacts with ATP; that stretch reads GPNMAGKS.

It belongs to the DNA mismatch repair MutS family.

Its function is as follows. This protein is involved in the repair of mismatches in DNA. It is possible that it carries out the mismatch recognition step. This protein has a weak ATPase activity. The sequence is that of DNA mismatch repair protein MutS from Leptospira interrogans serogroup Icterohaemorrhagiae serovar copenhageni (strain Fiocruz L1-130).